A 72-amino-acid chain; its full sequence is Protein CYSTEINE-RICH TRANSMEMBRANE MODULE 1 (72 aa).

The span at 1 to 11 (MSQYDHNQSAG) shows a compositional bias: polar residues. The segment at 1–46 (MSQYDHNQSAGANPPPPMSTCTSPPPPIGYPTNQPSHGSVAQGKVE) is disordered. Over residues 13-29 (NPPPPMSTCTSPPPPIG) the composition is skewed to pro residues. Residues 49–65 (SKGDGFFKGCLAAMCCC) form a helical membrane-spanning segment.

The protein belongs to the CYSTM1 family. As to quaternary structure, heterodimers. Binds weakly to CYSTM7 and WIH1/CYSTM13. As to expression, mostly expressed in roots, flowers and siliques and, to a lower extent, in stems and leaves.

It is found in the cell membrane. The protein localises to the nucleus. Functionally, may be involved in aluminium (Al) tolerance. Involved in resistance to abiotic stress. The sequence is that of Protein CYSTEINE-RICH TRANSMEMBRANE MODULE 1 from Arabidopsis thaliana (Mouse-ear cress).